The following is a 487-amino-acid chain: Adenylosuccinate synthetase, chloroplastic (487 aa).

A chloroplast-targeting transit peptide spans 1–46 (MSLSTVNHAAAAAAAAGSGKSFSAAAPAAPSVRLPRTRAPAAAAVS). Residues 74–80 (GDEGKGK) and 102–104 (GHT) contribute to the GTP site. Catalysis depends on aspartate 75, which acts as the Proton acceptor. 2 residues coordinate Mg(2+): aspartate 75 and glycine 102. IMP is bound by residues 75-78 (DEGK), 100-103 (NAGH), threonine 192, arginine 206, glutamine 286, threonine 301, and arginine 365. Histidine 103 (proton donor) is an active-site residue. Residue 361–367 (TTTGRPR) coordinates substrate. GTP-binding positions include arginine 367, 393–395 (KLD), and 476–478 (GVG).

The protein belongs to the adenylosuccinate synthetase family. In terms of assembly, homodimer. It depends on Mg(2+) as a cofactor.

Its subcellular location is the plastid. It is found in the chloroplast. The catalysed reaction is IMP + L-aspartate + GTP = N(6)-(1,2-dicarboxyethyl)-AMP + GDP + phosphate + 2 H(+). Its pathway is purine metabolism; AMP biosynthesis via de novo pathway; AMP from IMP: step 1/2. Functionally, plays an important role in the de novo pathway and in the salvage pathway of purine nucleotide biosynthesis. Catalyzes the first committed step in the biosynthesis of AMP from IMP. This Oryza sativa subsp. indica (Rice) protein is Adenylosuccinate synthetase, chloroplastic.